A 491-amino-acid chain; its full sequence is Pre-glycoprotein polyprotein GP complex (491 aa).

G2 is lipidated: N-myristoyl glycine; by host. Residues 2 to 17 (GQIVTFFQEVPHVIEE) are Extracellular-facing. A helical membrane pass occupies residues 18–33 (VMNIVLIALSVLAVLK). Residues 34-58 (GLYNFATCGLVGLVTFLLLCGRSCT) lie on the Cytoplasmic side of the membrane. C57 is a binding site for Zn(2+). Residues 59-432 (TSLYKGVYEL…QGKTPLGLVD (374 aa)) lie on the Extracellular side of the membrane. N79, N89, N99, N109, N119, and N167 each carry an N-linked (GlcNAc...) asparagine; by host glycan. 6 cysteine pairs are disulfide-bonded: C86-C231, C118-C155, C180-C212, C279-C292, C301-C310, and C364-C385. N224 is a glycosylation site (N-linked (GlcNAc...) asparagine; by host). 4 N-linked (GlcNAc...) asparagine; by host glycosylation sites follow: N365, N373, N390, and N395. A helical membrane pass occupies residues 433–453 (LFVFSTSFYLISIFLHLVKIP). The Cytoplasmic portion of the chain corresponds to 454 to 491 (THRHIVGKSCPKPHRLNHMGICSCGLYKQPGVPVKWKR). Positions 455, 457, 463, 467, 475, and 477 each coordinate Zn(2+).

The protein belongs to the arenaviridae GPC protein family. Interacts with glycoprotein G2. Part of the GP complex (GP-C) together with glycoprotein G1 and glycoprotein G2. The GP-complex interacts with protein Z, which interacts with ribonucleocapsid; these interactions may induce virion budding. As to quaternary structure, homotrimer; disulfide-linked. In pre-fusion state, G1 homotrimers bind G2 homotrimers via ionic interactions. Part of the GP complex (GP-C) together with glycoprotein G2 and the stable signal peptide. Interacts with the primary host receptor DAG1 on the cell surface; this interaction occurs at pH 8.0 but not at pH 6.0 and below. Upon virus internalization and at endosomal pH, interacts with the host lysosomal protein LAMP1; this interaction mediates G1 dissociation from GP-C and membrane fusion. The GP-complex interacts with protein Z, which interacts with ribonucleocapsid; these interactions may induce virion budding. In terms of assembly, homotrimer. Interacts with the stable signal peptide. In pre-fusion state, G2 homotrimers bind G1 homotrimers via ionic interactions. Part of the GP complex (GP-C) together with glycoprotein G1 and the stable signal peptide. Acidification in the endosome triggers rearrangements, which ultimately leads to a 6 helix bundle formed by the two heptad repeat domains (HR1 and HR2) in post-fusion state. The GP-complex interacts with protein Z, which interacts with ribonucleocapsid; these interactions may induce virion budding. Post-translationally, specific enzymatic cleavages in vivo yield mature proteins. GP-C polyprotein is cleaved in the endoplasmic reticulum by the host protease MBTPS1. Only cleaved glycoprotein is incorporated into virions. In terms of processing, the SSP remains stably associated with the GP complex following cleavage by signal peptidase and plays crucial roles in the trafficking of GP through the secretory pathway. Myristoylation is necessary for GP2-mediated fusion activity.

The protein localises to the virion membrane. It localises to the host endoplasmic reticulum membrane. The protein resides in the host Golgi apparatus membrane. Its subcellular location is the host cell membrane. Its function is as follows. Functions as a cleaved signal peptide that is retained as the third component of the GP complex (GP-C). Helps to stabilize the spike complex in its native conformation. The SSP is required for efficient glycoprotein expression, post-translational maturation cleavage of G1 and G2, glycoprotein transport to the cell surface plasma membrane, formation of infectious virus particles, and acid pH-dependent glycoprotein-mediated cell fusion. In terms of biological role, forms the virion spikes together with glycoprotein G2. The glycoprotein spike trimers are connected to the underlying matrix. Interacts with the host receptor. Mediates virus attachment to the host primary receptor alpha-dystroglycan DAG1 (alpha-DG) at the cell surface. This attachment induces virion internalization apparently through macropinocytosis. Following endocytosis, there is a pH-dependent switch from binding DAG1 to the host lysosomal receptor LAMP1. This latter binding triggers the dissociation of GP1, exposing the fusion subunit, GP2, such that fusion can occur. Down-modulates host DAG1. Functionally, forms the virion spikes together with glycoprotein G1. The glycoprotein spike trimers are connected to the underlying matrix. Class I viral fusion protein that directs fusion of viral and host endosomal membranes, leading to delivery of the nucleocapsid into the cytoplasm. Membrane fusion is mediated by irreversible conformational changes induced by acidification. The polypeptide is Pre-glycoprotein polyprotein GP complex (Homo sapiens (Human)).